Here is a 367-residue protein sequence, read N- to C-terminus: Phosphoribosylaminoimidazole-succinocarboxamide synthase (367 aa).

Belongs to the SAICAR synthetase family.

The enzyme catalyses 5-amino-1-(5-phospho-D-ribosyl)imidazole-4-carboxylate + L-aspartate + ATP = (2S)-2-[5-amino-1-(5-phospho-beta-D-ribosyl)imidazole-4-carboxamido]succinate + ADP + phosphate + 2 H(+). The protein operates within purine metabolism; IMP biosynthesis via de novo pathway; 5-amino-1-(5-phospho-D-ribosyl)imidazole-4-carboxamide from 5-amino-1-(5-phospho-D-ribosyl)imidazole-4-carboxylate: step 1/2. The polypeptide is Phosphoribosylaminoimidazole-succinocarboxamide synthase (Shewanella oneidensis (strain ATCC 700550 / JCM 31522 / CIP 106686 / LMG 19005 / NCIMB 14063 / MR-1)).